Reading from the N-terminus, the 91-residue chain is DNA-binding protein HU (91 aa).

This sequence belongs to the bacterial histone-like protein family.

In terms of biological role, histone-like DNA-binding protein which is capable of wrapping DNA to stabilize it, and thus to prevent its denaturation under extreme environmental conditions. Also seems to act as a fortuitous virulence factor in delayed sequelae by binding to heparan sulfate-proteoglycans in the extracellular matrix of target organs and acting as a nidus for in situ immune complex formation. The protein is DNA-binding protein HU (hup) of Streptococcus pyogenes serotype M1.